Here is a 150-residue protein sequence, read N- to C-terminus: UPF0102 protein sll0189 (150 aa).

The protein belongs to the UPF0102 family.

In Synechocystis sp. (strain ATCC 27184 / PCC 6803 / Kazusa), this protein is UPF0102 protein sll0189.